The chain runs to 273 residues: Aspartate/glutamate leucyltransferase (273 aa).

The protein belongs to the R-transferase family. Bpt subfamily.

It is found in the cytoplasm. The catalysed reaction is N-terminal L-glutamyl-[protein] + L-leucyl-tRNA(Leu) = N-terminal L-leucyl-L-glutamyl-[protein] + tRNA(Leu) + H(+). It catalyses the reaction N-terminal L-aspartyl-[protein] + L-leucyl-tRNA(Leu) = N-terminal L-leucyl-L-aspartyl-[protein] + tRNA(Leu) + H(+). Its function is as follows. Functions in the N-end rule pathway of protein degradation where it conjugates Leu from its aminoacyl-tRNA to the N-termini of proteins containing an N-terminal aspartate or glutamate. The sequence is that of Aspartate/glutamate leucyltransferase from Ruegeria pomeroyi (strain ATCC 700808 / DSM 15171 / DSS-3) (Silicibacter pomeroyi).